We begin with the raw amino-acid sequence, 198 residues long: Segregation and condensation protein B (198 aa).

Belongs to the ScpB family. Homodimer. Homodimerization may be required to stabilize the binding of ScpA to the Smc head domains. Component of a cohesin-like complex composed of ScpA, ScpB and the Smc homodimer, in which ScpA and ScpB bind to the head domain of Smc. The presence of the three proteins is required for the association of the complex with DNA.

The protein localises to the cytoplasm. In terms of biological role, participates in chromosomal partition during cell division. May act via the formation of a condensin-like complex containing Smc and ScpA that pull DNA away from mid-cell into both cell halves. The protein is Segregation and condensation protein B of Acetivibrio thermocellus (strain ATCC 27405 / DSM 1237 / JCM 9322 / NBRC 103400 / NCIMB 10682 / NRRL B-4536 / VPI 7372) (Clostridium thermocellum).